A 94-amino-acid polypeptide reads, in one-letter code: Putative pterin-4-alpha-carbinolamine dehydratase (94 aa).

It belongs to the pterin-4-alpha-carbinolamine dehydratase family.

It catalyses the reaction (4aS,6R)-4a-hydroxy-L-erythro-5,6,7,8-tetrahydrobiopterin = (6R)-L-erythro-6,7-dihydrobiopterin + H2O. In Chloroflexus aggregans (strain MD-66 / DSM 9485), this protein is Putative pterin-4-alpha-carbinolamine dehydratase.